Consider the following 211-residue polypeptide: Arginine exporter protein ArgO (211 aa).

Helical transmembrane passes span 1–21, 37–57, 68–88, 111–131, 147–167, and 186–206; these read MLSYYFQGLVLGAAMILPLGP, LMIAMLCAVSDLLLICAGIFG, LLALVTWGGVAFLLWYGFGAL, IIATMLAVTWLNPHVYLDTFV, WFALGTVSASFLWFFGLALLA, and LVGLVMWFIAFQLAKEGIHHI.

It belongs to the LysE/ArgO transporter (TC 2.A.75) family.

It localises to the cell inner membrane. The catalysed reaction is L-arginine(in) = L-arginine(out). Involved in the export of arginine. Important to control the intracellular level of arginine and the correct balance between arginine and lysine. The chain is Arginine exporter protein ArgO from Enterobacter sp. (strain 638).